A 291-amino-acid chain; its full sequence is NADH-cytochrome b5 reductase 2 (291 aa).

Residues 7–23 traverse the membrane as a helical segment; sequence PIAATSVVAAAASSYYF. The region spanning 41 to 145 is the FAD-binding FR-type domain; sequence DQWVDLKLKS…KGPIIKYQWQ (105 aa). 148 to 183 serves as a coordination point for FAD; that stretch reads LHKEITLIGAGTGITPLYQLISAINKNPEDKTKVNL.

This sequence belongs to the flavoprotein pyridine nucleotide cytochrome reductase family. It depends on FAD as a cofactor.

It is found in the mitochondrion outer membrane. The enzyme catalyses 2 Fe(III)-[cytochrome b5] + NADH = 2 Fe(II)-[cytochrome b5] + NAD(+) + H(+). Its function is as follows. May mediate the reduction of outer membrane cytochrome b5. This chain is NADH-cytochrome b5 reductase 2 (MCR1), found in Yarrowia lipolytica (strain CLIB 122 / E 150) (Yeast).